The following is a 353-amino-acid chain: Uroporphyrinogen decarboxylase (353 aa).

Substrate-binding positions include 27–31, phenylalanine 46, aspartate 76, tyrosine 152, serine 207, and histidine 321; that span reads RQAGR.

This sequence belongs to the uroporphyrinogen decarboxylase family. As to quaternary structure, homodimer.

The protein localises to the cytoplasm. It carries out the reaction uroporphyrinogen III + 4 H(+) = coproporphyrinogen III + 4 CO2. The protein operates within porphyrin-containing compound metabolism; protoporphyrin-IX biosynthesis; coproporphyrinogen-III from 5-aminolevulinate: step 4/4. Functionally, catalyzes the decarboxylation of four acetate groups of uroporphyrinogen-III to yield coproporphyrinogen-III. In Listeria monocytogenes serovar 1/2a (strain ATCC BAA-679 / EGD-e), this protein is Uroporphyrinogen decarboxylase.